The primary structure comprises 704 residues: DNA ligase (704 aa).

NAD(+)-binding positions include 43–47 (DADYD), 92–93 (SL), and glutamate 124. The N6-AMP-lysine intermediate role is filled by lysine 126. NAD(+) contacts are provided by arginine 147, glutamate 182, lysine 298, and lysine 322. Residues cysteine 427, cysteine 430, cysteine 445, and cysteine 451 each contribute to the Zn(2+) site. The BRCT domain occupies 625 to 704 (PVASPVAGKI…DGWLRLIGDA (80 aa)).

The protein belongs to the NAD-dependent DNA ligase family. LigA subfamily. Mg(2+) is required as a cofactor. It depends on Mn(2+) as a cofactor.

It catalyses the reaction NAD(+) + (deoxyribonucleotide)n-3'-hydroxyl + 5'-phospho-(deoxyribonucleotide)m = (deoxyribonucleotide)n+m + AMP + beta-nicotinamide D-nucleotide.. In terms of biological role, DNA ligase that catalyzes the formation of phosphodiester linkages between 5'-phosphoryl and 3'-hydroxyl groups in double-stranded DNA using NAD as a coenzyme and as the energy source for the reaction. It is essential for DNA replication and repair of damaged DNA. In Cereibacter sphaeroides (strain ATCC 17023 / DSM 158 / JCM 6121 / CCUG 31486 / LMG 2827 / NBRC 12203 / NCIMB 8253 / ATH 2.4.1.) (Rhodobacter sphaeroides), this protein is DNA ligase.